Here is a 235-residue protein sequence, read N- to C-terminus: Orotidine 5'-phosphate decarboxylase (235 aa).

Residues aspartate 10, lysine 32, 59–68, threonine 123, arginine 184, glutamine 193, glycine 213, and arginine 214 each bind substrate; that span reads DLKLHDIPNT. The active-site Proton donor is lysine 61.

It belongs to the OMP decarboxylase family. Type 1 subfamily. As to quaternary structure, homodimer.

It catalyses the reaction orotidine 5'-phosphate + H(+) = UMP + CO2. It participates in pyrimidine metabolism; UMP biosynthesis via de novo pathway; UMP from orotate: step 2/2. Catalyzes the decarboxylation of orotidine 5'-monophosphate (OMP) to uridine 5'-monophosphate (UMP). The chain is Orotidine 5'-phosphate decarboxylase from Paramagnetospirillum magneticum (strain ATCC 700264 / AMB-1) (Magnetospirillum magneticum).